We begin with the raw amino-acid sequence, 370 residues long: ATP synthase gamma chain, chloroplastic (370 aa).

The N-terminal 54 residues, 1–54, are a transit peptide targeting the chloroplast; it reads MRSFCIAALLAVASAFTTQPTSFTVKTANVGERASGVFPEQSSAHRTRKATIVM. Cys-145 is an active-site residue.

The protein belongs to the ATPase gamma chain family. F-type ATPases have 2 components, CF(1) - the catalytic core - and CF(0) - the membrane proton channel. CF(1) has five subunits: alpha(3), beta(3), gamma(1), delta(1), epsilon(1). CF(0) has four main subunits: a, b, b' and c.

The protein localises to the plastid. It localises to the chloroplast thylakoid membrane. In terms of biological role, produces ATP from ADP in the presence of a proton gradient across the membrane. The gamma chain is believed to be important in regulating ATPase activity and the flow of protons through the CF(0) complex. The sequence is that of ATP synthase gamma chain, chloroplastic (ATPC) from Phaeodactylum tricornutum (Diatom).